A 418-amino-acid chain; its full sequence is Putative ion-transport protein YfeO (418 aa).

A run of 12 helical transmembrane segments spans residues 10 to 30, 54 to 74, 99 to 119, 120 to 140, 149 to 169, 186 to 206, 223 to 243, 258 to 278, 300 to 320, 322 to 342, 343 to 363, and 371 to 391; these read LLLS…LIVV, DSPL…GLVI, ALPG…SLGP, EHPI…RLLP, ILAS…AALI, LFAP…FFHP, ILSG…AVWC, VLVL…GGPV, DYFL…ASGF, GGRI…LHEH, VPAV…VLVV, and LFMA…CIVM.

The protein belongs to the chloride channel (TC 2.A.49) family.

It localises to the cell membrane. The chain is Putative ion-transport protein YfeO from Escherichia coli O8 (strain IAI1).